A 490-amino-acid chain; its full sequence is Bifunctional protein HldE (490 aa).

Positions 1 to 330 (MERKNVESLF…GSLGFQHGEG (330 aa)) are ribokinase. 205-208 (NRKE) lines the ATP pocket. Residue Asp-275 is part of the active site. The segment at 356–490 (FTNGCFDLLH…EKILKAYGEE (135 aa)) is cytidylyltransferase.

This sequence in the N-terminal section; belongs to the carbohydrate kinase PfkB family. In the C-terminal section; belongs to the cytidylyltransferase family. In terms of assembly, homodimer.

It carries out the reaction D-glycero-beta-D-manno-heptose 7-phosphate + ATP = D-glycero-beta-D-manno-heptose 1,7-bisphosphate + ADP + H(+). The enzyme catalyses D-glycero-beta-D-manno-heptose 1-phosphate + ATP + H(+) = ADP-D-glycero-beta-D-manno-heptose + diphosphate. The protein operates within nucleotide-sugar biosynthesis; ADP-L-glycero-beta-D-manno-heptose biosynthesis; ADP-L-glycero-beta-D-manno-heptose from D-glycero-beta-D-manno-heptose 7-phosphate: step 1/4. It participates in nucleotide-sugar biosynthesis; ADP-L-glycero-beta-D-manno-heptose biosynthesis; ADP-L-glycero-beta-D-manno-heptose from D-glycero-beta-D-manno-heptose 7-phosphate: step 3/4. In terms of biological role, catalyzes the phosphorylation of D-glycero-D-manno-heptose 7-phosphate at the C-1 position to selectively form D-glycero-beta-D-manno-heptose-1,7-bisphosphate. Catalyzes the ADP transfer from ATP to D-glycero-beta-D-manno-heptose 1-phosphate, yielding ADP-D-glycero-beta-D-manno-heptose. The sequence is that of Bifunctional protein HldE from Geobacter sulfurreducens (strain ATCC 51573 / DSM 12127 / PCA).